The following is a 218-amino-acid chain: ATP synthase subunit a (218 aa).

5 helical membrane passes run isoleucine 17 to leucine 37, tyrosine 75 to isoleucine 95, aspartate 104 to isoleucine 124, leucine 162 to leucine 184, and glycine 196 to histidine 216.

Belongs to the ATPase A chain family. As to quaternary structure, F-type ATPases have 2 components, CF(1) - the catalytic core - and CF(0) - the membrane proton channel. CF(1) has five subunits: alpha(3), beta(3), gamma(1), delta(1), epsilon(1). CF(0) has three main subunits: a(1), b(2) and c(9-12). The alpha and beta chains form an alternating ring which encloses part of the gamma chain. CF(1) is attached to CF(0) by a central stalk formed by the gamma and epsilon chains, while a peripheral stalk is formed by the delta and b chains. In this bacterium the a and b subunits are transcribed but do not seem to be translated, thus the ATP synthase consists of the alpha, beta, gamma, delta, epsilon and c subunits.

The protein resides in the cell membrane. Functionally, key component of the proton channel; it plays a direct role in the translocation of protons across the membrane. The polypeptide is ATP synthase subunit a (Moorella thermoacetica (strain ATCC 39073 / JCM 9320)).